The primary structure comprises 498 residues: ATP synthase subunit beta, chloroplastic (498 aa).

172-179 (GGAGVGKT) lines the ATP pocket.

This sequence belongs to the ATPase alpha/beta chains family. As to quaternary structure, F-type ATPases have 2 components, CF(1) - the catalytic core - and CF(0) - the membrane proton channel. CF(1) has five subunits: alpha(3), beta(3), gamma(1), delta(1), epsilon(1). CF(0) has four main subunits: a(1), b(1), b'(1) and c(9-12).

The protein resides in the plastid. The protein localises to the chloroplast thylakoid membrane. It carries out the reaction ATP + H2O + 4 H(+)(in) = ADP + phosphate + 5 H(+)(out). Its function is as follows. Produces ATP from ADP in the presence of a proton gradient across the membrane. The catalytic sites are hosted primarily by the beta subunits. In Galbulimima belgraveana (Northern pigeonberry ash), this protein is ATP synthase subunit beta, chloroplastic.